Consider the following 968-residue polypeptide: Glycine dehydrogenase (decarboxylating) (968 aa).

Lysine 712 bears the N6-(pyridoxal phosphate)lysine mark.

The protein belongs to the GcvP family. In terms of assembly, the glycine cleavage system is composed of four proteins: P, T, L and H. It depends on pyridoxal 5'-phosphate as a cofactor.

The catalysed reaction is N(6)-[(R)-lipoyl]-L-lysyl-[glycine-cleavage complex H protein] + glycine + H(+) = N(6)-[(R)-S(8)-aminomethyldihydrolipoyl]-L-lysyl-[glycine-cleavage complex H protein] + CO2. Functionally, the glycine cleavage system catalyzes the degradation of glycine. The P protein binds the alpha-amino group of glycine through its pyridoxal phosphate cofactor; CO(2) is released and the remaining methylamine moiety is then transferred to the lipoamide cofactor of the H protein. The chain is Glycine dehydrogenase (decarboxylating) from Prochlorococcus marinus (strain NATL2A).